An 85-amino-acid polypeptide reads, in one-letter code: Small ribosomal subunit protein uS15 (85 aa).

Belongs to the universal ribosomal protein uS15 family. In terms of assembly, part of the 30S ribosomal subunit. Forms a bridge to the 50S subunit in the 70S ribosome, contacting the 23S rRNA.

Its function is as follows. One of the primary rRNA binding proteins, it binds directly to 16S rRNA where it helps nucleate assembly of the platform of the 30S subunit by binding and bridging several RNA helices of the 16S rRNA. Functionally, forms an intersubunit bridge (bridge B4) with the 23S rRNA of the 50S subunit in the ribosome. The sequence is that of Small ribosomal subunit protein uS15 from Fusobacterium nucleatum subsp. nucleatum (strain ATCC 25586 / DSM 15643 / BCRC 10681 / CIP 101130 / JCM 8532 / KCTC 2640 / LMG 13131 / VPI 4355).